Consider the following 395-residue polypeptide: Dihydrolipoyllysine-residue succinyltransferase component of 2-oxoglutarate dehydrogenase complex (395 aa).

Residues 2-77 (RVKIIVPSLG…AVGEEIGEIN (76 aa)) form the Lipoyl-binding domain. Lys-43 is modified (N6-lipoyllysine). Residues 111 to 148 (TLAPSVQKLVTENKLDPNNIKGTGRDGRITKGDVLATI) enclose the Peripheral subunit-binding (PSBD) domain. Residues His-366 and Asp-370 contribute to the active site.

It belongs to the 2-oxoacid dehydrogenase family. As to quaternary structure, forms a 24-polypeptide structural core with octahedral symmetry. Part of the 2-oxoglutarate dehydrogenase (OGDH) complex composed of E1 (2-oxoglutarate dehydrogenase), E2 (dihydrolipoamide succinyltransferase) and E3 (dihydrolipoamide dehydrogenase); the complex contains multiple copies of the three enzymatic components (E1, E2 and E3). (R)-lipoate is required as a cofactor.

The catalysed reaction is N(6)-[(R)-dihydrolipoyl]-L-lysyl-[protein] + succinyl-CoA = N(6)-[(R)-S(8)-succinyldihydrolipoyl]-L-lysyl-[protein] + CoA. The protein operates within amino-acid degradation; L-lysine degradation via saccharopine pathway; glutaryl-CoA from L-lysine: step 6/6. Its function is as follows. E2 component of the 2-oxoglutarate dehydrogenase (OGDH) complex which catalyzes the second step in the conversion of 2-oxoglutarate to succinyl-CoA and CO(2). This chain is Dihydrolipoyllysine-residue succinyltransferase component of 2-oxoglutarate dehydrogenase complex (sucB), found in Rickettsia conorii (strain ATCC VR-613 / Malish 7).